The following is a 450-amino-acid chain: Salicylate synthase (450 aa).

Glu-252 (proton donor) is an active-site residue. Residue 270–271 (GT) coordinates substrate. Residue Glu-297 participates in Mg(2+) binding. Substrate is bound by residues Tyr-385, Arg-405, and 419–421 (GAG). Positions 431 and 434 each coordinate Mg(2+). Lys-438 contributes to the substrate binding site.

Belongs to the anthranilate synthase component I family. Salicylate synthase subfamily. In terms of assembly, monomer. Mg(2+) serves as cofactor.

It catalyses the reaction chorismate = isochorismate. The catalysed reaction is isochorismate = salicylate + pyruvate. It carries out the reaction chorismate = prephenate. Its pathway is siderophore biosynthesis; mycobactin biosynthesis. Involved in the incorporation of salicylate into the virulence-conferring salicylate-based siderophore mycobactin. Catalyzes the initial conversion of chorismate to yield the intermediate isochorismate (isochorismate synthase activity), and the subsequent elimination of the enolpyruvyl side chain in a lyase reaction to give salicylate (isochorismate pyruvate-lyase activity). In the absence of magnesium, MbtI displays a chorismate mutase activity and converts chorismate to prephenate. The chain is Salicylate synthase (mbtI) from Mycolicibacterium paratuberculosis (strain ATCC BAA-968 / K-10) (Mycobacterium paratuberculosis).